A 448-amino-acid chain; its full sequence is B box and SPRY domain-containing protein (448 aa).

Positions 1 to 18 (MSSDVSGTESGSESGPES) are enriched in low complexity. A disordered region spans residues 1-58 (MSSDVSGTESGSESGPESVPEPVPEPGPEPESEPGPGPAPGPGPGPAPGPGPGLGREP). Over residues 19-51 (VPEPVPEPGPEPESEPGPGPAPGPGPGPAPGPG) the composition is skewed to pro residues. The B box-type zinc finger occupies 63–111 (QPCQLCPEHGKPLSWFCLSERRPVCATCAGFGGRCHRHRIRRAEEHAEE). Residues 257 to 448 (SPLLTQLWAT…VADQVISIVC (192 aa)) form the B30.2/SPRY domain.

Interacts with TRPV5 and TRPV6. Interacts with YWHAZ/14-3-3 protein zeta. In terms of tissue distribution, predominantly expressed in testis. Expressed in brain at low levels.

Its subcellular location is the cytoplasm. It is found in the membrane. Functionally, may regulate epithelial calcium transport by inhibiting TRPV5 activity. The protein is B box and SPRY domain-containing protein (Bspry) of Rattus norvegicus (Rat).